The following is a 165-amino-acid chain: Chaperone protein SicA (165 aa).

This sequence belongs to the LcrH/SycD chaperone family. In terms of assembly, dimer or higher-order oligomers.

It localises to the cytoplasm. Its function is as follows. Type III secretion-associated chaperone required for SipB and SipC stabilization. Prevents premature association of SipB with SipC, which may lead to their targeting for degradation. Along with InvF, required for transcription activation of sigDE (sopB pipC), sicAsipBCDA, and sopE. The sequence is that of Chaperone protein SicA (sicA) from Salmonella dublin.